We begin with the raw amino-acid sequence, 663 residues long: Protein LNK2 (663 aa).

Disordered stretches follow at residues 528–549 and 590–663; these read HYTS…VIPR and MEGP…KRKL. A compositionally biased stretch (basic and acidic residues) spans 602–629; sequence GTEEKGNFPKCSIRETHLTKQKAQKEEG. A compositionally biased stretch (polar residues) spans 639 to 648; that stretch reads APNSGSSSTV.

Interacts with CCA1, LHY, REV4 and REV8, but not with PRR7 or PRR9. As to expression, expressed in roots, stems, leaves, seedlings, cotyledons, inflorescences and siliques. Highest expression in root tips, young leaves and vasculatur tissues.

The protein localises to the nucleus. Transcriptional coactivator necessary for expression of the clock genes PRR5 and TOC1. Antagonizes REV8 function in the regulation of anthocyanin accumulation. Involved in red light input to the clock. Activates clock-controlled genes with afternoon peak. Mediates light inhibition of hypocotyl elongation. Unable to bind to DNA, but recruited to the evening element (EE)-containing region of the PRR5 and TOC1 promoters through its interaction with the DNA binding proteins REV8 and REV4. In Arabidopsis thaliana (Mouse-ear cress), this protein is Protein LNK2.